The chain runs to 417 residues: NADH-quinone oxidoreductase subunit D (417 aa).

Belongs to the complex I 49 kDa subunit family. In terms of assembly, NDH-1 is composed of 14 different subunits. Subunits NuoB, C, D, E, F, and G constitute the peripheral sector of the complex.

It is found in the cell inner membrane. It catalyses the reaction a quinone + NADH + 5 H(+)(in) = a quinol + NAD(+) + 4 H(+)(out). Functionally, NDH-1 shuttles electrons from NADH, via FMN and iron-sulfur (Fe-S) centers, to quinones in the respiratory chain. The immediate electron acceptor for the enzyme in this species is believed to be ubiquinone. Couples the redox reaction to proton translocation (for every two electrons transferred, four hydrogen ions are translocated across the cytoplasmic membrane), and thus conserves the redox energy in a proton gradient. The chain is NADH-quinone oxidoreductase subunit D from Herminiimonas arsenicoxydans.